The following is a 475-amino-acid chain: UDP-N-acetylmuramate--L-alanine ligase (475 aa).

ATP is bound at residue 114–120; the sequence is GTHGKTT.

It belongs to the MurCDEF family.

It localises to the cytoplasm. It carries out the reaction UDP-N-acetyl-alpha-D-muramate + L-alanine + ATP = UDP-N-acetyl-alpha-D-muramoyl-L-alanine + ADP + phosphate + H(+). It participates in cell wall biogenesis; peptidoglycan biosynthesis. Functionally, cell wall formation. The sequence is that of UDP-N-acetylmuramate--L-alanine ligase from Bartonella tribocorum (strain CIP 105476 / IBS 506).